The primary structure comprises 363 residues: Phosrestin-2 (363 aa).

It belongs to the arrestin family.

This Calliphora vicina (Blue blowfly) protein is Phosrestin-2 (ARR1).